We begin with the raw amino-acid sequence, 416 residues long: Type II methyltransferase M.PspPI (416 aa).

An SAM-dependent MTase C5-type domain is found at 77 to 410; the sequence is YSLVELFAGA…KAIIRMLNAA (334 aa). Cys149 is a catalytic residue.

The protein belongs to the class I-like SAM-binding methyltransferase superfamily. C5-methyltransferase family.

It catalyses the reaction a 2'-deoxycytidine in DNA + S-adenosyl-L-methionine = a 5-methyl-2'-deoxycytidine in DNA + S-adenosyl-L-homocysteine + H(+). In terms of biological role, a methylase, recognizes the double-stranded sequence 5'-GGNCC-3', methylates C-4 on both strands, and protects the DNA from cleavage by the PspPI endonuclease. In Psychrobacter sp. (strain TA137), this protein is Type II methyltransferase M.PspPI.